Consider the following 248-residue polypeptide: E3 ubiquitin-protein ligase BIG BROTHER (248 aa).

The RING-type; atypical zinc finger occupies 197 to 238 (CVICQLKYKIGERQMNLPCKHVYHSECISKWLSINKVCPVCN).

Interacts with the E2 ubiquitin conjugating enzyme UBC10 via the RING domain. Interacts with DA1. Post-translationally, auto-ubiquitinated. In terms of tissue distribution, mostly expressed in inflorescence, and, to a lower extent, in seedlings, roots, stems, leaves and siliques.

It catalyses the reaction S-ubiquitinyl-[E2 ubiquitin-conjugating enzyme]-L-cysteine + [acceptor protein]-L-lysine = [E2 ubiquitin-conjugating enzyme]-L-cysteine + N(6)-ubiquitinyl-[acceptor protein]-L-lysine.. It functions in the pathway protein modification; protein ubiquitination. In terms of biological role, E3 ubiquitin-protein ligase that limits organ size, and possibly seed size, in a dose-dependent manner. Negatively regulates the duration of cell proliferation in leaves and petals independently of the major phytohormones (e.g. auxin, cytokinin, gibberellin, brassinosteroids, ethylene, abscisic acid, jasmonic acid), probably by targeting growth stimulators for degradation. Limits the proliferation of root meristematic cells. Polyubiquitinates DA1. Involved in the promotion of leaf senescence, in addition to its function in restricting plant growth. Possesses E3 ubiquitin-protein ligase activity in vitro. This Arabidopsis thaliana (Mouse-ear cress) protein is E3 ubiquitin-protein ligase BIG BROTHER (BB).